A 606-amino-acid chain; its full sequence is MNLFTSFTLLTLLILTTPIMMSHTGSHVNNKYQSYVKNIVFCAFITSLVPAMVYLHTNQETLISNWHWITIQTLKLTLSFKMDYFSLMFMPVALFITWSIMEFSMWYMHSDPYINQFFKYLLLFLITMLILVTANNLFQLFIGWEGVGIMSFLLIGWWFGRTDANTAALQAILYNRIGDIGLLASMAWFLSNMNTWDLEQIFMLNQNPLNFPLMGLVLAAAGKSAQFGLHPWLPSAMEGPTPVSALLHSSTMVVAGIFLLVRFYPLMENNKLIQTVTLCLGAITTLFTAICALTQNDIKKIIAFSTSSQLGLMMVTIGLNQPYLAFLHICTHAFFKAMLFLCSGSIIHNLNNEQDIRKMGGLFKALPFTTTALIIGCLALTGMPFLTGFYSKDPIIEAATSSYTNAWALLLTLIATSLTAVYSTRIIFFALLGQPRFPPSTTINENNPLLINPIKRLLVGSIFAGFILSNSIPPMTTPLMTMPLHLKLTALAMTTLGFIIAFEINLDTQNLKHKHPSNSFKFSTLLGYFPTIMHRLPPHLDLLMSQKLATSLLDLTWLETILPKTTALIQLKASTLTSNQQGLIKLYFLSFLITITLSMILFNYPE.

16 consecutive transmembrane segments (helical) span residues 1–21 (MNLFTSFTLLTLLILTTPIMM), 35–55 (YVKNIVFCAFITSLVPAMVYL), 87–107 (LMFMPVALFITWSIMEFSMWY), 114–134 (INQFFKYLLLFLITMLILVTA), 140–160 (LFIGWEGVGIMSFLLIGWWFG), 171–191 (AILYNRIGDIGLLASMAWFLS), 211–233 (FPLMGLVLAAAGKSAQFGLHPWL), 241–261 (TPVSALLHSSTMVVAGIFLLV), 272–292 (LIQTVTLCLGAITTLFTAICA), 301–320 (IIAFSTSSQLGLMMVTIGLN), 325–347 (AFLHICTHAFFKAMLFLCSGSII), 366–386 (LPFTTTALIIGCLALTGMPFL), 413–433 (LIATSLTAVYSTRIIFFALLG), 457–477 (LLVGSIFAGFILSNSIPPMTT), 482–502 (MPLHLKLTALAMTTLGFIIAF), and 582–602 (GLIKLYFLSFLITITLSMILF).

The protein belongs to the complex I subunit 5 family. Core subunit of respiratory chain NADH dehydrogenase (Complex I) which is composed of 45 different subunits.

Its subcellular location is the mitochondrion inner membrane. The enzyme catalyses a ubiquinone + NADH + 5 H(+)(in) = a ubiquinol + NAD(+) + 4 H(+)(out). Core subunit of the mitochondrial membrane respiratory chain NADH dehydrogenase (Complex I) which catalyzes electron transfer from NADH through the respiratory chain, using ubiquinone as an electron acceptor. Essential for the catalytic activity and assembly of complex I. This is NADH-ubiquinone oxidoreductase chain 5 (MT-ND5) from Balaenoptera physalus (Fin whale).